Consider the following 350-residue polypeptide: C5a anaphylatoxin chemotactic receptor 1 (350 aa).

Topologically, residues 1–36 (APMENSTYDYTNYDSLGTLDPSTPVDNTVRRLRPTT) are extracellular. Residue N5 is glycosylated (N-linked (GlcNAc...) asparagine). 2 positions are modified to sulfotyrosine: Y10 and Y13. Residues 37–63 (IVALVIYMAVFLVGVPGNALVVWVTAL) form a helical membrane-spanning segment. At 64–68 (EAKRT) the chain is on the cytoplasmic side. A helical membrane pass occupies residues 69–92 (VNAIWFLNLAVADLLSCLALPILF). Topologically, residues 93-109 (VSIIQEGHWPFGRAACS) are extracellular. A disulfide bridge connects residues C108 and C187. A helical transmembrane segment spans residues 110-131 (VLPSLILLNMYASILLLATISA). The Cytoplasmic portion of the chain corresponds to 132–152 (DRFLLVFNPIWCQNTRGAGLA). A helical transmembrane segment spans residues 153–173 (WLACCVAWGLALLLTIPSFLY). The Extracellular segment spans residues 174-200 (RKVLQDDYPPKTTCGVDYGHEGVRAER). A helical transmembrane segment spans residues 201–226 (AVAIVRLVVGFLLPLFTLSVCYTFLL). The Cytoplasmic segment spans residues 227–242 (LRTWSRNGTRSTKTLK). A helical transmembrane segment spans residues 243-265 (VVVAVVVSFFIFWLPYQVMGMIL). Residues 266–282 (ALLHPSSATFRWAIRLD) lie on the Extracellular side of the membrane. The chain crosses the membrane as a helical span at residues 283-303 (PLCIALAYVNCCINPIIYVVA). Residues 304–350 (GKGFQGQLRKSLPSLLRNVLAEESVIQGSKSFSRSTVDTVADKCQAV) lie on the Cytoplasmic side of the membrane. S314, S317, S327, S332, S334, and S338 each carry phosphoserine.

It belongs to the G-protein coupled receptor 1 family. In terms of assembly, homodimer. May also form higher-order oligomers. Interacts (when phosphorylated) with ARRB1 and ARRB2; the interaction is associated with internalization of C5aR. Post-translationally, sulfation plays a critical role in the association of C5aR with C5a, but no significant role in the ability of the receptor to transduce a signal and mobilize calcium in response to a small peptide agonist. In terms of processing, phosphorylated on serine residues in response to C5a binding, resulting in internalization of the receptor and short-term desensitization to C5a.

It is found in the cell membrane. The protein resides in the cytoplasmic vesicle. Receptor for the chemotactic and inflammatory peptide anaphylatoxin C5a. The ligand interacts with at least two sites on the receptor: a high-affinity site on the extracellular N-terminus, and a second site in the transmembrane region which activates downstream signaling events. Receptor activation stimulates chemotaxis, granule enzyme release, intracellular calcium release and superoxide anion production. This is C5a anaphylatoxin chemotactic receptor 1 (C5AR1) from Oryctolagus cuniculus (Rabbit).